The sequence spans 674 residues: Pentatricopeptide repeat-containing protein At4g17616 (674 aa).

PPR repeat units follow at residues 409 to 443, 444 to 478, 519 to 553, 554 to 584, and 593 to 627; these read GSRL…GYPM, ELAT…GLIT, MLYE…KIPP, TVQS…IKRN, and TQDL…DMYN.

Belongs to the PPR family. P subfamily.

The polypeptide is Pentatricopeptide repeat-containing protein At4g17616 (Arabidopsis thaliana (Mouse-ear cress)).